A 270-amino-acid polypeptide reads, in one-letter code: Large ribosomal subunit protein uL10 (270 aa).

The tract at residues 234 to 270 (VTELEAGKTRPKREGNRRQAMNGDEMDEDQSSDEDSD) is disordered. Over residues 238-250 (EAGKTRPKREGNR) the composition is skewed to basic and acidic residues. Residues 257-270 (DEMDEDQSSDEDSD) show a composition bias toward acidic residues.

This sequence belongs to the universal ribosomal protein uL10 family. In terms of assembly, associates with the pre-60S ribosomal particle.

It is found in the nucleus. The protein localises to the nucleolus. Its subcellular location is the cytoplasm. Component of the ribosome assembly machinery. Nuclear paralog of the ribosomal protein P0, it binds pre-60S subunits at an early stage of assembly in the nucleolus, and is replaced by P0 in cytoplasmic pre-60S subunits and mature 80S ribosomes. In Chaetomium thermophilum (strain DSM 1495 / CBS 144.50 / IMI 039719) (Thermochaetoides thermophila), this protein is Large ribosomal subunit protein uL10.